Here is a 349-residue protein sequence, read N- to C-terminus: Phosphorylcholine phosphatase (349 aa).

Residues 1–22 (MTFAKGILAALALAAAVGQASA) form the signal peptide. Asp-53 serves as the catalytic Nucleophile. Positions 53 and 55 each coordinate Mg(2+). Residue Asp-55 is the Proton donor of the active site. Cys-109 and Cys-116 are oxidised to a cystine. Mg(2+) is bound at residue Asp-284.

The protein belongs to the HAD-like hydrolase superfamily. Monomer. Homodimer. Homotetramer. Requires Mg(2+) as cofactor.

It localises to the periplasm. The enzyme catalyses phosphocholine + H2O = choline + phosphate. The catalysed reaction is phosphoethanolamine + H2O = ethanolamine + phosphate. Activity is inhibited by high concentrations of phosphorylcholine, phosphorylethanolamine, choline or betaine. Displays different properties depending on the substrate utilized, the pH conditions as well as the presence or absence of metal ions. At pH 5, activity is inhibited by Al(3+) ions. At pH 7.4, the enzyme cannot catalyze the hydrolysis of pNPP, phosphorylethanolamine is a poor substrate in either the presence or absence of divalent cations, and activity measured with phosphorylcholine is independent of divalent cations or is not inhibited by Al(3+) ions. Mg(2+) produces identical activation at pH 5.0 and 7.4, but Zn(2+) is an activator at pH 5.0 and becomes an inhibitor at pH 7.4. This inhibition at pH 7.4 may be due to a transition from octahedral to tetrahedral coordination geometry, which is produced by hydrolysis of the Zn-hexacoordinated complex. In terms of biological role, catalyzes the hydrolysis of phosphorylcholine (PCho) to produce choline and inorganic phosphate. Can also hydrolyze phosphorylethanolamine and the nonphysiological substrate p-nitrophenylphosphate (pNPP). Shows higher affinity and catalytic efficiency with phosphorylcholine as substrate. Functionally, is probably involved in virulence. The bacteria may break down various host compounds or host cell membranes through the coordinated action of phospholipase C and phosphocholine phosphatase. The final consequence of the action of these enzymes is an increase of the free choline concentration, which may promote the pathogenicity of P.aeruginosa. This is Phosphorylcholine phosphatase from Pseudomonas aeruginosa (strain ATCC 15692 / DSM 22644 / CIP 104116 / JCM 14847 / LMG 12228 / 1C / PRS 101 / PAO1).